A 310-amino-acid polypeptide reads, in one-letter code: Phytoene synthase 2, chloroplastic (310 aa).

Residues 1–25 constitute a chloroplast transit peptide; it reads DPDIVLPGNLGLLSEAYDRCGEVCA.

It belongs to the phytoene/squalene synthase family. Monomer.

It is found in the plastid. The protein resides in the chloroplast. It catalyses the reaction 2 (2E,6E,10E)-geranylgeranyl diphosphate = 15-cis-phytoene + 2 diphosphate. It participates in carotenoid biosynthesis; phytoene biosynthesis; all-trans-phytoene from geranylgeranyl diphosphate: step 1/1. Functionally, catalyzes the reaction from prephytoene diphosphate to phytoene. The chain is Phytoene synthase 2, chloroplastic (PSY2) from Solanum lycopersicum (Tomato).